The sequence spans 127 residues: MRHYEIILMINPEKNKKIFIIIEEYNKLIHMYKGIIHRFEDWGKRSLSYTIKNLKKAHYFLMNIEVSSECIKELENSFKFNINIIRYFILTRTKAHKKISPILKNKEENKKELNSSVIKINKNIKKK.

The protein belongs to the bacterial ribosomal protein bS6 family.

Its function is as follows. Binds together with bS18 to 16S ribosomal RNA. The sequence is that of Small ribosomal subunit protein bS6 from Buchnera aphidicola subsp. Cinara cedri (strain Cc).